A 1571-amino-acid polypeptide reads, in one-letter code: Disco-interacting protein 2 homolog A (1571 aa).

Residues 9-127 form the DMAP1-binding domain; that stretch reads EAAPLPAEVR…KRRSVLVHSS (119 aa). The disordered stretch occupies residues 60–203; the sequence is LQAENRIPGP…APSAAATPGA (144 aa). Over residues 86 to 98 the composition is skewed to basic and acidic residues; the sequence is ASRDERFRSDVHT. Serine 94 carries the post-translational modification Phosphoserine. Polar residues-rich tracts occupy residues 127–139 and 152–162; these read SVET…TSSA and LTSTPLQSHSS. Phosphothreonine is present on residues threonine 132 and threonine 155. Low complexity predominate over residues 174–203; that stretch reads SSTSSSASSTSSHPGGRPTTAPSAAATPGA. 2 consecutive short sequence motifs (PXXP motif; required for interaction with CTTN) follow at residues 283-286 and 307-310; these read PKRP and PNQP. The interval 302–327 is disordered; sequence VQQPDPNQPKPEGSETSVLRGEPLTA.

This sequence belongs to the DIP2 family. Interacts with FSTL1; DIP2A may act as a cell surface receptor for FSTL1. Interacts (via N-terminus) with CTTN (via SH3 domain); the interaction promotes acetylation of CTTN and is required for proper synaptic transmission. Interacts with SHANK3. In terms of tissue distribution, low expression in all tissues tested.

It localises to the cell membrane. The protein resides in the mitochondrion. The protein localises to the cell projection. Its subcellular location is the dendritic spine. The catalysed reaction is acetate + ATP + CoA = acetyl-CoA + AMP + diphosphate. Functionally, catalyzes the de novo synthesis of acetyl-CoA in vitro. Promotes acetylation of CTTN, possibly by providing the acetyl donor, ensuring correct dendritic spine morphology and synaptic transmission. Binds to follistatin-related protein FSTL1 and may act as a cell surface receptor for FSTL1, contributing to AKT activation and subsequent FSTL1-induced survival and function of endothelial cells and cardiac myocytes. This chain is Disco-interacting protein 2 homolog A (DIP2A), found in Homo sapiens (Human).